We begin with the raw amino-acid sequence, 327 residues long: 2-keto-3-deoxygluconate permease (327 aa).

10 consecutive transmembrane segments (helical) span residues I10–P30, G42–I62, K73–S93, I95–V115, A139–G159, I163–A183, V199–I219, L224–A244, T254–A274, and S289–W309.

Belongs to the KdgT transporter family.

It is found in the cell inner membrane. The enzyme catalyses 2-dehydro-3-deoxy-D-gluconate(in) + H(+)(in) = 2-dehydro-3-deoxy-D-gluconate(out) + H(+)(out). Its function is as follows. Catalyzes the proton-dependent uptake of 2-keto-3-deoxygluconate (KDG) into the cell. The chain is 2-keto-3-deoxygluconate permease from Escherichia coli O139:H28 (strain E24377A / ETEC).